We begin with the raw amino-acid sequence, 668 residues long: Putative ankyrin repeat protein FPV244 (668 aa).

ANK repeat units follow at residues 40–69 (IPFT…KLIY), 144–173 (EYMK…DVNA), 177–206 (YCRT…DVNI), 210–239 (DDLS…NINK), 272–302 (YKNT…DVNA), 306–336 (KGET…DVNA), 340–370 (LYIT…NVNA), 374–403 (CDKT…DIEA), 407–437 (KIGT…NVNS), 441–471 (YLST…DVNA), 473–502 (NIRN…ELRD), and 571–602 (NMFY…EINT).

This chain is Putative ankyrin repeat protein FPV244, found in Vertebrata (FPV).